A 780-amino-acid chain; its full sequence is Protein SEY1 (780 aa).

Residues 1-680 are Cytoplasmic-facing; the sequence is MDSKEEAIQL…KRSMIKTTTH (680 aa). Positions 35 to 265 constitute a GB1/RHD3-type G domain; the sequence is GVNYHVISVF…NEDYYFKPEY (231 aa). 45–52 lines the GTP pocket; it reads GSQSSGKS. Residues 440 to 463 adopt a coiled-coil conformation; that stretch reads EVKEEVVKRFENDLKETSDKLRVT. The chain crosses the membrane as a helical span at residues 681-701; sequence IPLWIYAIIVVLGWNEFMMVI. The Lumenal portion of the chain corresponds to 702 to 704; that stretch reads RNP. The chain crosses the membrane as a helical span at residues 705-725; the sequence is LFVTLTILILVSFYFINKFDL. The Cytoplasmic segment spans residues 726 to 780; it reads WGPVKSVAQTAAGETIGTIKTKLRDFVLEEHEKTPKIQSEKSNSDSEKVVENEKS. Residues 756-780 are disordered; sequence HEKTPKIQSEKSNSDSEKVVENEKS.

It belongs to the TRAFAC class dynamin-like GTPase superfamily. GB1/RHD3 GTPase family. RHD3 subfamily.

It is found in the endoplasmic reticulum membrane. Cooperates with the reticulon proteins and tubule-shaping DP1 family proteins to generate and maintain the structure of the tubular endoplasmic reticulum network. Has GTPase activity, which is required for its function in ER organization. This is Protein SEY1 from Vanderwaltozyma polyspora (strain ATCC 22028 / DSM 70294 / BCRC 21397 / CBS 2163 / NBRC 10782 / NRRL Y-8283 / UCD 57-17) (Kluyveromyces polysporus).